A 363-amino-acid chain; its full sequence is Phosphoserine aminotransferase (363 aa).

Arg42 provides a ligand contact to L-glutamate. Pyridoxal 5'-phosphate-binding positions include 76–77 (GR), Trp102, Thr156, Asp175, and Gln198. Position 199 is an N6-(pyridoxal phosphate)lysine (Lys199). 240-241 (NT) is a pyridoxal 5'-phosphate binding site.

It belongs to the class-V pyridoxal-phosphate-dependent aminotransferase family. SerC subfamily. As to quaternary structure, homodimer. It depends on pyridoxal 5'-phosphate as a cofactor.

The protein resides in the cytoplasm. The enzyme catalyses O-phospho-L-serine + 2-oxoglutarate = 3-phosphooxypyruvate + L-glutamate. It catalyses the reaction 4-(phosphooxy)-L-threonine + 2-oxoglutarate = (R)-3-hydroxy-2-oxo-4-phosphooxybutanoate + L-glutamate. It functions in the pathway amino-acid biosynthesis; L-serine biosynthesis; L-serine from 3-phospho-D-glycerate: step 2/3. Its pathway is cofactor biosynthesis; pyridoxine 5'-phosphate biosynthesis; pyridoxine 5'-phosphate from D-erythrose 4-phosphate: step 3/5. Catalyzes the reversible conversion of 3-phosphohydroxypyruvate to phosphoserine and of 3-hydroxy-2-oxo-4-phosphonooxybutanoate to phosphohydroxythreonine. The polypeptide is Phosphoserine aminotransferase (Shewanella baltica (strain OS185)).